We begin with the raw amino-acid sequence, 87 residues long: Alpha-toxin To2 (87 aa).

An N-terminal signal peptide occupies residues 1-20 (MIRFVLFISCFFLIGTVVEC). Residues 22 to 84 (KDGYLMEGDG…IWDSKNNKCG (63 aa)) form the LCN-type CS-alpha/beta domain. 4 disulfide bridges follow: Cys-32-Cys-83, Cys-36-Cys-58, Cys-44-Cys-64, and Cys-48-Cys-66. At Lys-85 the chain carries Lysine amide.

As to expression, expressed by the venom gland.

It is found in the secreted. Functionally, alpha toxins bind voltage-independently at site-3 of sodium channels (Nav) and inhibit the inactivation of the activated channels, thereby blocking neuronal transmission. Affects the tetrodotoxin-sensitive sodium current permeability of F-11 rat neuroblastoma cells. Produces a dose dependent increase in amplitude and duration of the current. This Tityus obscurus (Amazonian scorpion) protein is Alpha-toxin To2.